We begin with the raw amino-acid sequence, 200 residues long: Recombination protein RecR (200 aa).

The C4-type zinc finger occupies 57–72; sequence CERCRNYAQSTLCPVC. The Toprim domain maps to 80–175; that stretch reads SLVCIVATPG…GVSRIAQGVP (96 aa).

Belongs to the RecR family.

In terms of biological role, may play a role in DNA repair. It seems to be involved in an RecBC-independent recombinational process of DNA repair. It may act with RecF and RecO. This is Recombination protein RecR from Alcanivorax borkumensis (strain ATCC 700651 / DSM 11573 / NCIMB 13689 / SK2).